Reading from the N-terminus, the 252-residue chain is tRNA pseudouridine synthase A (252 aa).

Aspartate 52 functions as the Nucleophile in the catalytic mechanism. Position 110 (tyrosine 110) interacts with substrate.

Belongs to the tRNA pseudouridine synthase TruA family. Homodimer.

The catalysed reaction is uridine(38/39/40) in tRNA = pseudouridine(38/39/40) in tRNA. Functionally, formation of pseudouridine at positions 38, 39 and 40 in the anticodon stem and loop of transfer RNAs. The protein is tRNA pseudouridine synthase A of Syntrophotalea carbinolica (strain DSM 2380 / NBRC 103641 / GraBd1) (Pelobacter carbinolicus).